A 471-amino-acid chain; its full sequence is Intraflagellar transport protein 46 homolog (471 aa).

Disordered regions lie at residues 1 to 202 and 226 to 246; these read MSSE…SNMR and SRLE…EDDD. Composition is skewed to acidic residues over residues 89-99 and 231-246; these read SEPQEVIDVND and DSSN…EDDD.

Belongs to the IFT46 family. As to quaternary structure, component of the IFT complex B composed of at least che-2, che-13, dyf-1, dyf-3, dyf-6, dyf-11, dyf-13, ift-20, ift-74, ift-81, ifta-2, osm-1, osm-5 and osm-6. Expressed in the hypodermis and sensory neurons including inner labial, PDE, amphid and phasmid neurons.

It is found in the cell projection. Its subcellular location is the cilium. The protein localises to the cytoplasm. It localises to the cytoskeleton. The protein resides in the cilium basal body. It is found in the dendrite. Its subcellular location is the perikaryon. Its function is as follows. Component of the intraflagellar transport (IFT) complex B required for transport of proteins in the motile cilium. May be required for ciliary entrance and transport of specific ciliary cargo proteins such as che-3 which are related to motility. Required for normal morphology and function of ciliated amphid sensory neurons. This chain is Intraflagellar transport protein 46 homolog, found in Caenorhabditis elegans.